The following is a 460-amino-acid chain: RING finger protein DG17 (460 aa).

The RING-type zinc-finger motif lies at 27 to 67 (CPICFEFIYKKQIYQCKSGHHACKECWEKSLETKKECMTCK). 2 consecutive TRAF-type zinc fingers follow at residues 141 to 194 (SHLI…KKEL) and 196 to 253 (THYK…SELQ). Residues 269-294 (IEKLTNQVGQSKKTHDELLKKIEDLS) adopt a coiled-coil conformation. The 129-residue stretch at 320–448 (GYRNKWIISN…DDKLIIEIYI (129 aa)) folds into the MATH domain.

Belongs to the TNF receptor-associated factor family. A subfamily.

It localises to the cytoplasm. In terms of biological role, probable adapter protein and signal transducer that links members of the tumor necrosis factor receptor family to different signaling pathways by association with the receptor cytoplasmic domain and kinases. The polypeptide is RING finger protein DG17 (zfaA) (Dictyostelium discoideum (Social amoeba)).